A 207-amino-acid polypeptide reads, in one-letter code: Large ribosomal subunit protein uL4 (207 aa).

The segment at 44 to 76 is disordered; that stretch reads KRRGTASAKTRSEVRGGGRKPWRQKGTGRARHG. Residues 60–76 are compositionally biased toward basic residues; sequence GGRKPWRQKGTGRARHG.

The protein belongs to the universal ribosomal protein uL4 family. Part of the 50S ribosomal subunit.

In terms of biological role, one of the primary rRNA binding proteins, this protein initially binds near the 5'-end of the 23S rRNA. It is important during the early stages of 50S assembly. It makes multiple contacts with different domains of the 23S rRNA in the assembled 50S subunit and ribosome. Forms part of the polypeptide exit tunnel. The protein is Large ribosomal subunit protein uL4 of Natranaerobius thermophilus (strain ATCC BAA-1301 / DSM 18059 / JW/NM-WN-LF).